A 93-amino-acid polypeptide reads, in one-letter code: HssA/B-like protein 26 (93 aa).

It belongs to the hssA/B family.

This is HssA/B-like protein 26 (hssl26) from Dictyostelium discoideum (Social amoeba).